The sequence spans 282 residues: Elongation factor Ts (282 aa).

The tract at residues 80–83 (TDFV) is involved in Mg(2+) ion dislocation from EF-Tu.

It belongs to the EF-Ts family.

It localises to the cytoplasm. In terms of biological role, associates with the EF-Tu.GDP complex and induces the exchange of GDP to GTP. It remains bound to the aminoacyl-tRNA.EF-Tu.GTP complex up to the GTP hydrolysis stage on the ribosome. In Pasteurella multocida (strain Pm70), this protein is Elongation factor Ts (tsf).